The following is an 89-amino-acid chain: MSVADINKQEVVKQFARGTNDTGSPEVQVALLTARINELTPHFKAHMKDHHSRRGLLKMVSRRRRLLDYLKKNDADRYRSLIEKLGLRK.

Belongs to the universal ribosomal protein uS15 family. As to quaternary structure, part of the 30S ribosomal subunit. Forms a bridge to the 50S subunit in the 70S ribosome, contacting the 23S rRNA.

Functionally, one of the primary rRNA binding proteins, it binds directly to 16S rRNA where it helps nucleate assembly of the platform of the 30S subunit by binding and bridging several RNA helices of the 16S rRNA. In terms of biological role, forms an intersubunit bridge (bridge B4) with the 23S rRNA of the 50S subunit in the ribosome. The chain is Small ribosomal subunit protein uS15 from Ralstonia nicotianae (strain ATCC BAA-1114 / GMI1000) (Ralstonia solanacearum).